Reading from the N-terminus, the 1038-residue chain is Zinc finger protein 628 (1038 aa).

The tract at residues 1-31 (MAGSHVDMAPASTTEGTGEKPGPTAPAPTPA) is disordered. The segment covering 13-22 (TTEGTGEKPG) has biased composition (low complexity). C2H2-type zinc fingers lie at residues 34-56 (YECG…QRTH), 62-84 (YKCP…QRGH), 90-112 (YQCP…RSVH), 118-140 (FTCG…LRQH), 146-168 (YPCP…RHVH), and 174-196 (YTCG…QRVH). Thr197 is modified (phosphothreonine). The C2H2-type 7 zinc finger occupies 202 to 224 (FRCPLCPKTFTHSSNLLLHHRTH). Disordered stretches follow at residues 220 to 242 (HHRT…ETSR) and 254 to 273 (LQPR…PPVV). Pro residues-rich tracts occupy residues 227–237 (APGPAPAPAPP) and 257–273 (RSPP…PPVV). C2H2-type zinc fingers lie at residues 346–368 (FACL…QHSH), 376–398 (FRCG…QQCH), 446–468 (YKCA…LRDH), 474–496 (YQCG…QRVH), 502–524 (FTCG…LRLH), 530–552 (YACT…RHVH), and 558–580 (HSCS…QRVH). Thr581 carries the post-translational modification Phosphothreonine. C2H2-type zinc fingers lie at residues 586 to 608 (FRCP…QRTH) and 614 to 636 (FACP…LRTH). Disordered regions lie at residues 637-661 (TPAT…LAAA) and 717-763 (PSSV…AGQG). The segment covering 723–733 (PTPPPPPPPPK) has biased composition (pro residues). Low complexity predominate over residues 734 to 756 (VILLPPASAGGPGSGAARPGPRS). 4 repeat units span residues 811 to 821 (VQLQPAQEVAT), 822 to 832 (VQLQPAQEVTT), 833 to 843 (VQLQPAQEVTT), and 844 to 854 (VQLQPLTGQVS). The 4 X 11 AA tandem repeats of VQLQP-[AL]-[QT]-[EG]-[VQ]-[ATV]-[ST] stretch occupies residues 811-854 (VQLQPAQEVATVQLQPAQEVTTVQLQPAQEVTTVQLQPLTGQVS). Residues 922-1038 (DGEQTRLCVQ…LPAVQLVHTF (117 aa)) are interaction with TAF4B.

Interacts with TAF4B. Expressed widely in testis, in both germline and somatic cells. Seems to have particularly strong expression in meiotic spermatocytes, postmeiotic round spermatids and Sertoli cells. Not detected in elongating spermatids or mature sperm (at protein level). Expressed in testis, ovary, spleen, lung, brain, liver and kidney. Expressed in D3 embryonic stem cells and F9 embryonal carcinoma cells.

It localises to the nucleus. Functionally, transcriptional activator. Binds DNA on GT-box consensus sequence 5'-TTGGTT-3'. Plays a role in spermiogenesis. The protein is Zinc finger protein 628 of Mus musculus (Mouse).